Reading from the N-terminus, the 325-residue chain is Phenylalanine--tRNA ligase alpha subunit (325 aa).

Glutamate 251 contacts Mg(2+).

This sequence belongs to the class-II aminoacyl-tRNA synthetase family. Phe-tRNA synthetase alpha subunit type 1 subfamily. As to quaternary structure, tetramer of two alpha and two beta subunits. Mg(2+) serves as cofactor.

It is found in the cytoplasm. It carries out the reaction tRNA(Phe) + L-phenylalanine + ATP = L-phenylalanyl-tRNA(Phe) + AMP + diphosphate + H(+). The protein is Phenylalanine--tRNA ligase alpha subunit (pheS) of Thermotoga maritima (strain ATCC 43589 / DSM 3109 / JCM 10099 / NBRC 100826 / MSB8).